Here is a 120-residue protein sequence, read N- to C-terminus: ATP-dependent Clp protease adapter protein ClpS (120 aa).

The tract at residues 1–25 (MHARSEIRLTFNQDRPQSNEDDGSG) is disordered.

It belongs to the ClpS family. In terms of assembly, binds to the N-terminal domain of the chaperone ClpA.

Involved in the modulation of the specificity of the ClpAP-mediated ATP-dependent protein degradation. The sequence is that of ATP-dependent Clp protease adapter protein ClpS from Pseudomonas putida (strain W619).